Consider the following 131-residue polypeptide: Small ribosomal subunit protein uS8 (131 aa).

The protein belongs to the universal ribosomal protein uS8 family. As to quaternary structure, part of the 30S ribosomal subunit. Contacts proteins S5 and S12.

Functionally, one of the primary rRNA binding proteins, it binds directly to 16S rRNA central domain where it helps coordinate assembly of the platform of the 30S subunit. This chain is Small ribosomal subunit protein uS8, found in Shewanella amazonensis (strain ATCC BAA-1098 / SB2B).